Consider the following 134-residue polypeptide: Ribonuclease VapC11 (134 aa).

A PINc domain is found at 2–126 (ILIDTSAWVE…ADFDVIARIT (125 aa)). 2 residues coordinate Mg(2+): aspartate 5 and aspartate 98.

Belongs to the PINc/VapC protein family. Mg(2+) serves as cofactor.

Functionally, toxic component of a type II toxin-antitoxin (TA) system. Acts as an RNase. Its toxic effects on cell growth and colony formation are neutralized by coexpression with cognate antitoxin VapB11. This chain is Ribonuclease VapC11, found in Mycobacterium tuberculosis (strain CDC 1551 / Oshkosh).